Here is a 393-residue protein sequence, read N- to C-terminus: F-box protein KIB4 (393 aa).

An F-box domain is found at 12-59; sequence AKQPILVLDLVRLVLERLSFVDFHRARCVSSVWYSASKSCIGGTNPTA.

It localises to the cytoplasm. The protein resides in the nucleus. It is found in the nucleolus. Functionally, component of SCF(ASK-cullin-F-box) E3 ubiquitin ligase complexes, which may mediate the ubiquitination and subsequent proteasomal degradation of target proteins. Required for brassinosteroid (BR) signal transduction. Mediates ASK7/BIN2/SK21 inactivation both by competing with substrate binding (e.g. BZR1) and by promoting its ubiquitination and subsequent proteasomal degradation. The protein is F-box protein KIB4 of Arabidopsis thaliana (Mouse-ear cress).